The sequence spans 375 residues: MTDLDPVVLAERLIDCPSITPATGAVFDCLQAMLEPLGFAIHRFVAGEAPDGPVENLFAIRKGPEGARHFAFAGHLDVVPPGEGWTSGPFKAERRGELLYGRGAVDMKGSIAAMVAAVAEIPADAGTLSFIITGDEEGPARYGTVPLIDLIRQLGAEPDLCLVGEPTSVHRLGDMVKIGRRGSVNMWIACKGAQGHVAYPHLADNPIPRLVALLADLDALVLDGGTEWFQPSNLEITDLEVGNPATNVIPAEARARISIRFNDRHTGAELVARVEEIAHRHKGEVRAVISGESFITLPGAFSAMIADAVKAETGLDPELSTSGGTSDARFLRAVCPVVEFGLCNATMHKKDEAVAMEDLRVLQRIYRRIALSALS.

Zn(2+) is bound at residue histidine 75. The active site involves aspartate 77. Aspartate 106 lines the Zn(2+) pocket. Glutamate 136 functions as the Proton acceptor in the catalytic mechanism. The Zn(2+) site is built by glutamate 137, glutamate 165, and histidine 348.

The protein belongs to the peptidase M20A family. DapE subfamily. Homodimer. Zn(2+) serves as cofactor. It depends on Co(2+) as a cofactor.

It carries out the reaction N-succinyl-(2S,6S)-2,6-diaminopimelate + H2O = (2S,6S)-2,6-diaminopimelate + succinate. It functions in the pathway amino-acid biosynthesis; L-lysine biosynthesis via DAP pathway; LL-2,6-diaminopimelate from (S)-tetrahydrodipicolinate (succinylase route): step 3/3. In terms of biological role, catalyzes the hydrolysis of N-succinyl-L,L-diaminopimelic acid (SDAP), forming succinate and LL-2,6-diaminopimelate (DAP), an intermediate involved in the bacterial biosynthesis of lysine and meso-diaminopimelic acid, an essential component of bacterial cell walls. The polypeptide is Succinyl-diaminopimelate desuccinylase (Novosphingobium aromaticivorans (strain ATCC 700278 / DSM 12444 / CCUG 56034 / CIP 105152 / NBRC 16084 / F199)).